The primary structure comprises 250 residues: Ubiquinone/menaquinone biosynthesis C-methyltransferase UbiE (250 aa).

Residues Thr-73, Asp-94, 122–123 (NA), and Ser-139 contribute to the S-adenosyl-L-methionine site.

It belongs to the class I-like SAM-binding methyltransferase superfamily. MenG/UbiE family.

It carries out the reaction a 2-demethylmenaquinol + S-adenosyl-L-methionine = a menaquinol + S-adenosyl-L-homocysteine + H(+). The enzyme catalyses a 2-methoxy-6-(all-trans-polyprenyl)benzene-1,4-diol + S-adenosyl-L-methionine = a 5-methoxy-2-methyl-3-(all-trans-polyprenyl)benzene-1,4-diol + S-adenosyl-L-homocysteine + H(+). It participates in quinol/quinone metabolism; menaquinone biosynthesis; menaquinol from 1,4-dihydroxy-2-naphthoate: step 2/2. The protein operates within cofactor biosynthesis; ubiquinone biosynthesis. Functionally, methyltransferase required for the conversion of demethylmenaquinol (DMKH2) to menaquinol (MKH2) and the conversion of 2-polyprenyl-6-methoxy-1,4-benzoquinol (DDMQH2) to 2-polyprenyl-3-methyl-6-methoxy-1,4-benzoquinol (DMQH2). The protein is Ubiquinone/menaquinone biosynthesis C-methyltransferase UbiE of Francisella tularensis subsp. novicida (strain U112).